The following is a 261-amino-acid chain: 4-phosphopantoate--beta-alanine ligase (261 aa).

ATP-binding positions include Arg17, Arg39, 181–182 (DL), 187–188 (RS), and 199–200 (NI).

Belongs to the archaeal phosphopantothenate synthetase family. As to quaternary structure, homodimer.

It carries out the reaction (R)-4-phosphopantoate + beta-alanine + ATP = (R)-4'-phosphopantothenate + AMP + diphosphate + H(+). It participates in cofactor biosynthesis; coenzyme A biosynthesis. Its function is as follows. Catalyzes the condensation of (R)-4-phosphopantoate and beta-alanine to 4'-phosphopantothenate in the CoA biosynthesis pathway. This chain is 4-phosphopantoate--beta-alanine ligase, found in Thermococcus onnurineus (strain NA1).